A 355-amino-acid chain; its full sequence is 3-dehydroquinate synthase (355 aa).

Residues 71–76 (EGEERK), 105–109 (GVVGD), 129–130 (TS), Lys-142, and Lys-151 contribute to the NAD(+) site. Residues Glu-184, His-246, and His-263 each contribute to the Zn(2+) site.

This sequence belongs to the sugar phosphate cyclases superfamily. Dehydroquinate synthase family. NAD(+) serves as cofactor. It depends on Co(2+) as a cofactor. The cofactor is Zn(2+).

It localises to the cytoplasm. It catalyses the reaction 7-phospho-2-dehydro-3-deoxy-D-arabino-heptonate = 3-dehydroquinate + phosphate. It functions in the pathway metabolic intermediate biosynthesis; chorismate biosynthesis; chorismate from D-erythrose 4-phosphate and phosphoenolpyruvate: step 2/7. Its function is as follows. Catalyzes the conversion of 3-deoxy-D-arabino-heptulosonate 7-phosphate (DAHP) to dehydroquinate (DHQ). This is 3-dehydroquinate synthase from Streptococcus pneumoniae serotype 4 (strain ATCC BAA-334 / TIGR4).